The following is a 162-amino-acid chain: Ribonuclease P protein component (162 aa).

The interval 1-62 (MDEKDLATQP…GPPKAGGRLL (62 aa)) is disordered. Residues 21-36 (GPHEDPRRQERAEAQA) show a composition bias toward basic and acidic residues.

Belongs to the RnpA family. As to quaternary structure, consists of a catalytic RNA component (M1 or rnpB) and a protein subunit.

The enzyme catalyses Endonucleolytic cleavage of RNA, removing 5'-extranucleotides from tRNA precursor.. Functionally, RNaseP catalyzes the removal of the 5'-leader sequence from pre-tRNA to produce the mature 5'-terminus. It can also cleave other RNA substrates such as 4.5S RNA. The protein component plays an auxiliary but essential role in vivo by binding to the 5'-leader sequence and broadening the substrate specificity of the ribozyme. The sequence is that of Ribonuclease P protein component from Thermus aquaticus.